The sequence spans 336 residues: DNA-directed RNA polymerase subunit alpha (336 aa).

An alpha N-terminal domain (alpha-NTD) region spans residues 1–234 (MIEFVIPKKL…NHFKIVTEGL (234 aa)). The segment at 269 to 336 (VYNRKIDELE…KFGLELRKGE (68 aa)) is alpha C-terminal domain (alpha-CTD).

The protein belongs to the RNA polymerase alpha chain family. As to quaternary structure, homodimer. The RNAP catalytic core consists of 2 alpha, 1 beta, 1 beta' and 1 omega subunit. When a sigma factor is associated with the core the holoenzyme is formed, which can initiate transcription.

It carries out the reaction RNA(n) + a ribonucleoside 5'-triphosphate = RNA(n+1) + diphosphate. Its function is as follows. DNA-dependent RNA polymerase catalyzes the transcription of DNA into RNA using the four ribonucleoside triphosphates as substrates. The protein is DNA-directed RNA polymerase subunit alpha of Thermotoga petrophila (strain ATCC BAA-488 / DSM 13995 / JCM 10881 / RKU-1).